Reading from the N-terminus, the 182-residue chain is MNGFSTEEDSREGPPAAPAAAPGYGQSCCLIADGERCVRPAGNASFSKRVQKSISQKKLKLDIDKSVRHLYICDFHKNFIQSVRNKRKRKASDDGGDSPEHDADIPEVDLFQLQVNTLRRYKRHYKLQTRPGFNKAQLAETVSRHFRNIPVNEKETLAYFIYMVKSNRSRLDQKSEGSKQLE.

An N-acetylmethionine modification is found at M1. Acidic residues predominate over residues 1–10 (MNGFSTEEDS). Positions 1–22 (MNGFSTEEDSREGPPAAPAAAP) are disordered. 2 disulfides stabilise this stretch: C28-C29 and C37-C73. An Atypical zinc finger spans residues 28–76 (CCLIADGERCVRPAGNASFSKRVQKSISQKKLKLDIDKSVRHLYICDFH). K48 is covalently cross-linked (Glycyl lysine isopeptide (Lys-Gly) (interchain with G-Cter in SUMO2)). The segment at 84 to 103 (RNKRKRKASDDGGDSPEHDA) is disordered. The short motif at 85–90 (NKRKRK) is the Nuclear localization signal (NLS) element. The interval 87 to 89 (RKR) is important for DNA and phosphoinositide binding. S92 and S98 each carry phosphoserine. Glycyl lysine isopeptide (Lys-Gly) (interchain with G-Cter in SUMO2) cross-links involve residues K154, K165, and K174.

The protein belongs to the SAP30 family. As to quaternary structure, interacts with components of the histone deacetylase complex SIN3A, HDAC1 and HDAC2. Binds histones and nucleosomes. Interacts with FEZ1.

It localises to the nucleus. The protein resides in the nucleolus. Its function is as follows. Functions as a transcription repressor, probably via its interaction with histone deacetylase complexes. Involved in the functional recruitment of the class 1 Sin3-histone deacetylase complex (HDAC) to the nucleolus. Binds DNA, apparently without sequence-specificity, and bends bound double-stranded DNA. Binds phosphoinositol phosphates (phosphoinositol 3-phosphate, phosphoinositol 4-phosphate and phosphoinositol 5-phosphate) via the same basic sequence motif that mediates DNA binding and nuclear import. The polypeptide is Histone deacetylase complex subunit SAP30L (Sap30l) (Mus musculus (Mouse)).